Consider the following 250-residue polypeptide: HTH-type transcriptional regulator KipR (250 aa).

The HTH iclR-type domain occupies 5–65; it reads NKTVVKSMAL…DASGAYSLGL (61 aa). Positions 26–45 form a DNA-binding region, H-T-H motif; sequence LSELVSLTGMPKTSVHRMVS. Residues 80–249 enclose the IclR-ED domain; the sequence is IRKIAKPVME…ALQISRKIGY (170 aa).

Functionally, transcriptional repressor of the kip gene-containing operon. This Bacillus subtilis (strain 168) protein is HTH-type transcriptional regulator KipR (kipR).